The chain runs to 466 residues: F-box only protein 15 (466 aa).

Positions 27–73 (SASLDSLPSEVLLKILSYLDAAALLCAGCVNRRFYHLANDNFIWIRI) constitute an F-box domain.

In terms of assembly, directly interacts with SKP1 and CUL1.

Its function is as follows. Substrate-recognition component of the SCF (SKP1-CUL1-F-box protein)-type E3 ubiquitin ligase complex. The sequence is that of F-box only protein 15 (FBXO15) from Bos taurus (Bovine).